Here is a 715-residue protein sequence, read N- to C-terminus: MTTTSAFMLNVRLDNVAVVAIDVPGEKVNTLKAEFAAQVRAILKQIRENKALQGVVFISAKADNFIAGADINIIGHCQNAQEAETLARQGQQLMAEIQALPVPVIAAIHGACLGGGLEMALACHRRICTDDVKTVLGLPEVQLGLLPGSGGTQRLPRLVGVSTALDMILIGKQLRARQALKAGLVDDVVPQTILLEAAVELAKKERLAQRTLPVRERILAGPLGRALLFRLVRKKTAQKTQGNYPATERIIDVIETGLAQGSSSGYDAEARAFGELAMTPQSQALRAVFFASTEVKKDPGSDAPPGPLNSVGILGGGLMGGGIAWVTACKGGLPVRIKDINTQGINHALKYSWDLLETKVRRRHIKASERDKQLALISGSTDYRGFSHRDLVIEAVFEDLPLKQQMVAEVEQNCATHTIFASNTSSLPIGDIAANAARPEQVIGLHFFSPVEKMPLVEVIPHASTSAQTIATTVKLAKKQGKTPIVVSDKAGFYVNRILAPYINEAIRMLTEGERVEHIDAALVKFGFPVGPIQLLDEVGIDTGTKIIPVLEAAYGERFSAPANVVASILNDDRKGRKNGRGFYLYGEKGRKSKKQVDPAIYKLIGVQGQSRLSAQQVAERCVMLMLNEAARCFDEKVIRSARDGDIGAVFGIGFPPFLGGPFRYMDALGPGEMVATLQRLAALYGPRYAPCEQLVRMAERREHFWTNGETDQGN.

The enoyl-CoA hydratase stretch occupies residues 1-190 (MTTTSAFMLN…KAGLVDDVVP (190 aa)). The segment at 306–714 (GPLNSVGILG…FWTNGETDQG (409 aa)) is 3-hydroxyacyl-CoA dehydrogenase.

In the N-terminal section; belongs to the enoyl-CoA hydratase/isomerase family. It in the central section; belongs to the 3-hydroxyacyl-CoA dehydrogenase family. In terms of assembly, heterotetramer of two alpha chains (FadJ) and two beta chains (FadI).

The protein localises to the cytoplasm. It carries out the reaction a (3S)-3-hydroxyacyl-CoA = a (2E)-enoyl-CoA + H2O. The catalysed reaction is a 4-saturated-(3S)-3-hydroxyacyl-CoA = a (3E)-enoyl-CoA + H2O. The enzyme catalyses a (3S)-3-hydroxyacyl-CoA + NAD(+) = a 3-oxoacyl-CoA + NADH + H(+). It catalyses the reaction (3S)-3-hydroxybutanoyl-CoA = (3R)-3-hydroxybutanoyl-CoA. Its pathway is lipid metabolism; fatty acid beta-oxidation. Functionally, catalyzes the formation of a hydroxyacyl-CoA by addition of water on enoyl-CoA. Also exhibits 3-hydroxyacyl-CoA epimerase and 3-hydroxyacyl-CoA dehydrogenase activities. This Salmonella paratyphi A (strain ATCC 9150 / SARB42) protein is Fatty acid oxidation complex subunit alpha.